The following is a 662-amino-acid chain: DNA topoisomerase 4 subunit B (662 aa).

Residues Tyr20, Asn60, Asp87, 129–135 (GLHGVGI), and Lys359 contribute to the ATP site. Residues 439–553 (TELFIVEGDS…EGHLYLAKPP (115 aa)) enclose the Toprim domain. Residues Glu445, Asp518, and Asp520 each contribute to the Mg(2+) site.

The protein belongs to the type II topoisomerase family. ParE type 1 subfamily. In terms of assembly, heterotetramer composed of ParC and ParE. The cofactor is Mg(2+). Mn(2+) is required as a cofactor. Ca(2+) serves as cofactor.

It carries out the reaction ATP-dependent breakage, passage and rejoining of double-stranded DNA.. Its function is as follows. Topoisomerase IV is essential for chromosome segregation. It relaxes supercoiled DNA. Performs the decatenation events required during the replication of a circular DNA molecule. This Rickettsia prowazekii (strain Madrid E) protein is DNA topoisomerase 4 subunit B.